The sequence spans 189 residues: MQVILLQRVAKLGQMGEVVNVKDGYARNYLLPQGKALRANESNIKSFEARKAQLEAQNLETKKEAAAVAEKLDGQSFVVIRSASDAGALYGSVTTRDAADAATEAGFTVDRGQVVLDRPIKELGLHTVTVTLHPEVAVKITLNVARSPEEAELQASGKSIQELAAEAEAAADFEIAELFDEIGAASQDE.

It belongs to the bacterial ribosomal protein bL9 family.

In terms of biological role, binds to the 23S rRNA. In Cereibacter sphaeroides (strain ATCC 17025 / ATH 2.4.3) (Rhodobacter sphaeroides), this protein is Large ribosomal subunit protein bL9.